Reading from the N-terminus, the 273-residue chain is 4-hydroxy-tetrahydrodipicolinate reductase (273 aa).

NAD(+) is bound by residues 12-17 and Glu38; that span reads GAGGRM. NADP(+) is bound at residue Arg39. Residues 102-104 and 126-129 each bind NAD(+); these read GTT and AANF. The active-site Proton donor/acceptor is the His159. His160 is a binding site for (S)-2,3,4,5-tetrahydrodipicolinate. The active-site Proton donor is Lys163. Position 169–170 (169–170) interacts with (S)-2,3,4,5-tetrahydrodipicolinate; that stretch reads GT.

Belongs to the DapB family. Homotetramer.

Its subcellular location is the cytoplasm. The enzyme catalyses (S)-2,3,4,5-tetrahydrodipicolinate + NAD(+) + H2O = (2S,4S)-4-hydroxy-2,3,4,5-tetrahydrodipicolinate + NADH + H(+). It catalyses the reaction (S)-2,3,4,5-tetrahydrodipicolinate + NADP(+) + H2O = (2S,4S)-4-hydroxy-2,3,4,5-tetrahydrodipicolinate + NADPH + H(+). The protein operates within amino-acid biosynthesis; L-lysine biosynthesis via DAP pathway; (S)-tetrahydrodipicolinate from L-aspartate: step 4/4. In terms of biological role, catalyzes the conversion of 4-hydroxy-tetrahydrodipicolinate (HTPA) to tetrahydrodipicolinate. The sequence is that of 4-hydroxy-tetrahydrodipicolinate reductase from Salmonella schwarzengrund (strain CVM19633).